The sequence spans 236 residues: 2,3,4,5-tetrahydropyridine-2,6-dicarboxylate N-acetyltransferase (236 aa).

Belongs to the transferase hexapeptide repeat family. DapH subfamily.

It carries out the reaction (S)-2,3,4,5-tetrahydrodipicolinate + acetyl-CoA + H2O = L-2-acetamido-6-oxoheptanedioate + CoA. It functions in the pathway amino-acid biosynthesis; L-lysine biosynthesis via DAP pathway; LL-2,6-diaminopimelate from (S)-tetrahydrodipicolinate (acetylase route): step 1/3. In terms of biological role, catalyzes the transfer of an acetyl group from acetyl-CoA to tetrahydrodipicolinate. This is 2,3,4,5-tetrahydropyridine-2,6-dicarboxylate N-acetyltransferase from Clostridium perfringens (strain ATCC 13124 / DSM 756 / JCM 1290 / NCIMB 6125 / NCTC 8237 / Type A).